Here is a 288-residue protein sequence, read N- to C-terminus: T-cell-interacting, activating receptor on myeloid cells protein 1 (288 aa).

Residues 1 to 16 (MISRLLSLLCLRLCVG) form the signal peptide. At 17 to 258 (QTDIPENGSP…EGYTVDNLIR (242 aa)) the chain is on the extracellular side. 2 consecutive Ig-like C2-type domains span residues 27–113 (PKPS…HPSN) and 124–217 (PQPS…LEIS). 2 disulfide bridges follow: C49–C97 and C146–C196. Residues N74 and N185 are each glycosylated (N-linked (GlcNAc...) asparagine). A helical transmembrane segment spans residues 259 to 279 (VGVAAAILLIVGGFLVEAWHS). Over 280–288 (ERLSPNKPW) the chain is Cytoplasmic.

As to quaternary structure, interacts with Fc receptor gamma chain FCER1G. In terms of processing, N-glycosylated. As to expression, expressed in lung, uterus, lymph nodes, spleen, thymus and bone marrow. Expressed in bone marrow CD11b(+)Gr-1(+) granulocyte precursors and mature neutrophils.

It is found in the cell membrane. In terms of biological role, may act as receptor. Negatively regulates TCR-mediated CD4(+) T cell proliferation and activation, possibly by binding an unknown ligand on the T cell surface. Enhances Toll-like receptor-mediated production of pro-inflammatory cytokines by macrophages and neutrophils. The sequence is that of T-cell-interacting, activating receptor on myeloid cells protein 1 (Tarm1) from Mus musculus (Mouse).